The following is an 80-amino-acid chain: Conotoxin Bu3 (80 aa).

The signal sequence occupies residues 1–22 (MKLMCVLIVSVLVLTACQLSTA). Residues 23-51 (DDTRDKQKDRLVRLFRKKRDSSDSGLLPR) constitute a propeptide that is removed on maturation. Disulfide bonds link cysteine 53–cysteine 69, cysteine 60–cysteine 72, and cysteine 68–cysteine 79.

It belongs to the conotoxin O1 superfamily. In terms of tissue distribution, expressed by the venom duct.

It localises to the secreted. The protein is Conotoxin Bu3 of Conus bullatus (Bubble cone).